The chain runs to 116 residues: T-cell leukemia/lymphoma protein 1A (116 aa).

It belongs to the TCL1 family. In terms of assembly, homodimer. Interacts with AKT1, AKT2 and AKT3 (via PH domain). Interacts with PNPT1; the interaction has no effect on PNPT1 exonuclease activity.

It is found in the cytoplasm. It localises to the nucleus. The protein localises to the microsome. The protein resides in the endoplasmic reticulum. Enhances the phosphorylation and activation of AKT1 and AKT2. Enhances cell proliferation, stabilizes mitochondrial membrane potential and promotes cell survival. This chain is T-cell leukemia/lymphoma protein 1A (Tcl1a), found in Mus musculus (Mouse).